The following is a 606-amino-acid chain: Vitamin B12 transporter BtuB (606 aa).

Positions 1–22 (MQKSLLAIAMASLLTPVSYLHA) are cleaved as a signal peptide. Residues 29-36 (DTVVVTAN) carry the TonB box motif. The TBDR plug domain occupies 41–153 (PLAEVIASTT…IAGVINVITT (113 aa)). The TBDR beta-barrel domain occupies 158-606 (SEGSVVSLGA…RYFANLTYQF (449 aa)). The TonB C-terminal box signature appears at 589–606 (LSYNAPERRYFANLTYQF).

This sequence belongs to the TonB-dependent receptor family. BtuB (TC 1.B.14.3.1) subfamily.

It is found in the cell outer membrane. Involved in the active translocation of vitamin B12 (cyanocobalamin) across the outer membrane to the periplasmic space. It derives its energy for transport by interacting with the trans-periplasmic membrane protein TonB. The polypeptide is Vitamin B12 transporter BtuB (Vibrio vulnificus (strain CMCP6)).